Reading from the N-terminus, the 649-residue chain is Choline transporter-like protein 3 (649 aa).

Residues alanine 33–valine 53 traverse the membrane as a helical segment. Residues asparagine 136 and asparagine 151 are each glycosylated (N-linked (GlcNAc...) asparagine). 5 consecutive transmembrane segments (helical) span residues aspartate 213–phenylalanine 233, phenylalanine 235–valine 255, leucine 284–valine 304, leucine 334–leucine 354, and leucine 384–glycine 404. N-linked (GlcNAc...) asparagine glycosylation is found at asparagine 414, asparagine 502, and asparagine 520. The next 2 helical transmembrane spans lie at phenylalanine 533–alanine 553 and valine 562–leucine 582.

Belongs to the CTL (choline transporter-like) family.

Its subcellular location is the membrane. This Bos taurus (Bovine) protein is Choline transporter-like protein 3 (SLC44A3).